The following is a 281-amino-acid chain: Pantothenate synthetase (281 aa).

An ATP-binding site is contributed by 31–38 (MGNLHAGH). His38 acts as the Proton donor in catalysis. Gln62 is a (R)-pantoate binding site. Gln62 provides a ligand contact to beta-alanine. 150–153 (GKKD) provides a ligand contact to ATP. Position 156 (Gln156) interacts with (R)-pantoate. Residues Val179 and 187–190 (MSSR) each bind ATP.

It belongs to the pantothenate synthetase family. As to quaternary structure, homodimer.

The protein resides in the cytoplasm. It catalyses the reaction (R)-pantoate + beta-alanine + ATP = (R)-pantothenate + AMP + diphosphate + H(+). It functions in the pathway cofactor biosynthesis; (R)-pantothenate biosynthesis; (R)-pantothenate from (R)-pantoate and beta-alanine: step 1/1. Functionally, catalyzes the condensation of pantoate with beta-alanine in an ATP-dependent reaction via a pantoyl-adenylate intermediate. The polypeptide is Pantothenate synthetase (Xylella fastidiosa (strain 9a5c)).